Consider the following 420-residue polypeptide: tRNA (guanine-N(7)-)-methyltransferase non-catalytic subunit TRM82 (420 aa).

Over residues 59–68 the composition is skewed to basic and acidic residues; that stretch reads KENDSKRQKS. The segment at 59-82 is disordered; sequence KENDSKRQKSESGQAKVSKIPTPG. 4 WD repeats span residues 87-127, 179-220, 224-266, and 340-379; these read PIYN…DNCL, GHVS…VIKN, GHHE…AKIE, and SYED…EETN.

Belongs to the WD repeat TRM82 family. As to quaternary structure, forms a heterodimer with the catalytic subunit TRM8.

Its subcellular location is the nucleus. It participates in tRNA modification; N(7)-methylguanine-tRNA biosynthesis. In terms of biological role, required for the formation of N(7)-methylguanine at position 46 (m7G46) in tRNA. In the complex, it is required to stabilize and induce conformational changes of the catalytic subunit. The protein is tRNA (guanine-N(7)-)-methyltransferase non-catalytic subunit TRM82 of Meyerozyma guilliermondii (strain ATCC 6260 / CBS 566 / DSM 6381 / JCM 1539 / NBRC 10279 / NRRL Y-324) (Yeast).